The following is a 338-amino-acid chain: Fructose-1,6-bisphosphatase class 1 (338 aa).

Residues glutamate 92, aspartate 113, leucine 115, and aspartate 116 each contribute to the Mg(2+) site. Substrate-binding positions include 116 to 119, asparagine 208, and lysine 274; that span reads DGSS. Glutamate 280 is a binding site for Mg(2+).

This sequence belongs to the FBPase class 1 family. Homotetramer. Requires Mg(2+) as cofactor.

Its subcellular location is the cytoplasm. It catalyses the reaction beta-D-fructose 1,6-bisphosphate + H2O = beta-D-fructose 6-phosphate + phosphate. Its pathway is carbohydrate biosynthesis; gluconeogenesis. The protein is Fructose-1,6-bisphosphatase class 1 of Paramagnetospirillum magneticum (strain ATCC 700264 / AMB-1) (Magnetospirillum magneticum).